Here is a 192-residue protein sequence, read N- to C-terminus: Pyridoxal 5'-phosphate synthase subunit PdxT (192 aa).

53-55 (GES) provides a ligand contact to L-glutamine. C82 functions as the Nucleophile in the catalytic mechanism. Residues R109 and 137-138 (IR) each bind L-glutamine. Residues H173 and E175 each act as charge relay system in the active site.

It belongs to the glutaminase PdxT/SNO family. In the presence of PdxS, forms a dodecamer of heterodimers. Only shows activity in the heterodimer.

The catalysed reaction is aldehydo-D-ribose 5-phosphate + D-glyceraldehyde 3-phosphate + L-glutamine = pyridoxal 5'-phosphate + L-glutamate + phosphate + 3 H2O + H(+). The enzyme catalyses L-glutamine + H2O = L-glutamate + NH4(+). Its pathway is cofactor biosynthesis; pyridoxal 5'-phosphate biosynthesis. In terms of biological role, catalyzes the hydrolysis of glutamine to glutamate and ammonia as part of the biosynthesis of pyridoxal 5'-phosphate. The resulting ammonia molecule is channeled to the active site of PdxS. The sequence is that of Pyridoxal 5'-phosphate synthase subunit PdxT from Methanoculleus marisnigri (strain ATCC 35101 / DSM 1498 / JR1).